We begin with the raw amino-acid sequence, 1071 residues long: DNA-directed RNA polymerase subunit beta (1071 aa).

Belongs to the RNA polymerase beta chain family. In plastids the minimal PEP RNA polymerase catalytic core is composed of four subunits: alpha, beta, beta', and beta''. When a (nuclear-encoded) sigma factor is associated with the core the holoenzyme is formed, which can initiate transcription.

The protein localises to the plastid. The protein resides in the chloroplast. The enzyme catalyses RNA(n) + a ribonucleoside 5'-triphosphate = RNA(n+1) + diphosphate. Functionally, DNA-dependent RNA polymerase catalyzes the transcription of DNA into RNA using the four ribonucleoside triphosphates as substrates. The protein is DNA-directed RNA polymerase subunit beta of Nymphaea alba (White water-lily).